We begin with the raw amino-acid sequence, 157 residues long: 2-C-methyl-D-erythritol 2,4-cyclodiphosphate synthase (157 aa).

Positions 8 and 10 each coordinate a divalent metal cation. 4-CDP-2-C-methyl-D-erythritol 2-phosphate-binding positions include 8-10 (DVH) and 34-35 (HS). A divalent metal cation is bound at residue His-42. 4-CDP-2-C-methyl-D-erythritol 2-phosphate is bound by residues 56–58 (DIG), 61–65 (FPDSD), 132–135 (TTTE), Phe-139, and Arg-142.

Belongs to the IspF family. Homotrimer. Requires a divalent metal cation as cofactor.

It catalyses the reaction 4-CDP-2-C-methyl-D-erythritol 2-phosphate = 2-C-methyl-D-erythritol 2,4-cyclic diphosphate + CMP. Its pathway is isoprenoid biosynthesis; isopentenyl diphosphate biosynthesis via DXP pathway; isopentenyl diphosphate from 1-deoxy-D-xylulose 5-phosphate: step 4/6. Functionally, involved in the biosynthesis of isopentenyl diphosphate (IPP) and dimethylallyl diphosphate (DMAPP), two major building blocks of isoprenoid compounds. Catalyzes the conversion of 4-diphosphocytidyl-2-C-methyl-D-erythritol 2-phosphate (CDP-ME2P) to 2-C-methyl-D-erythritol 2,4-cyclodiphosphate (ME-CPP) with a corresponding release of cytidine 5-monophosphate (CMP). The protein is 2-C-methyl-D-erythritol 2,4-cyclodiphosphate synthase of Syntrophomonas wolfei subsp. wolfei (strain DSM 2245B / Goettingen).